The chain runs to 435 residues: Ornithine decarboxylase (435 aa).

Lys76 bears the N6-(pyridoxal phosphate)lysine mark. Pyridoxal 5'-phosphate contacts are provided by residues Ser207, Gly244, and 283–286; that span reads EPGR. Substrate is bound at residue 339-340; sequence FD. Cys368 functions as the Proton donor; shared with dimeric partner in the catalytic mechanism. Asp369 is a substrate binding site. A pyridoxal 5'-phosphate-binding site is contributed by Tyr397.

This sequence belongs to the Orn/Lys/Arg decarboxylase class-II family. Homodimer. Only the dimer is catalytically active, as the active sites are constructed of residues from both monomers. The cofactor is pyridoxal 5'-phosphate.

The enzyme catalyses L-ornithine + H(+) = putrescine + CO2. Its pathway is amine and polyamine biosynthesis; putrescine biosynthesis via L-ornithine pathway; putrescine from L-ornithine: step 1/1. Its activity is regulated as follows. Inhibited by antizyme (AZ) in response to polyamine levels. AZ inhibits the assembly of the functional homodimer by binding to ODC monomers and targeting them for ubiquitin-independent proteolytic destruction by the 26S proteasome. In terms of biological role, catalyzes the first and rate-limiting step of polyamine biosynthesis that converts ornithine into putrescine, which is the precursor for the polyamines, spermidine and spermine. Polyamines are essential for cell proliferation and are implicated in cellular processes, ranging from DNA replication to apoptosis. In Panagrellus redivivus (Microworm), this protein is Ornithine decarboxylase (ODC).